Consider the following 144-residue polypeptide: Cysteine desulfuration protein SufE (144 aa).

C51 functions as the Cysteine persulfide intermediate in the catalytic mechanism.

Belongs to the SufE family. In terms of assembly, homodimer. Interacts with SufS.

Its subcellular location is the cytoplasm. It functions in the pathway cofactor biosynthesis; iron-sulfur cluster biosynthesis. Participates in cysteine desulfuration mediated by SufS. Cysteine desulfuration mobilizes sulfur from L-cysteine to yield L-alanine and constitutes an essential step in sulfur metabolism for biosynthesis of a variety of sulfur-containing biomolecules. Functions as a sulfur acceptor for SufS, by mediating the direct transfer of the sulfur atom from the S-sulfanylcysteine of SufS, an intermediate product of cysteine desulfuration process. This chain is Cysteine desulfuration protein SufE, found in Wigglesworthia glossinidia brevipalpis.